Consider the following 381-residue polypeptide: Glycerol-3-phosphate dehydrogenase [NAD(+)] (381 aa).

Residues Met-1–Pro-27 are disordered. NAD(+) contacts are provided by residues Gly-34–Gly-39, Phe-66, and Phe-122. Lys-145 is a substrate binding site. Ala-178 provides a ligand contact to NAD(+). Lys-238 functions as the Proton acceptor in the catalytic mechanism. NAD(+) contacts are provided by Arg-303 and Gln-332. Position 303-304 (Arg-303–Asn-304) interacts with substrate.

This sequence belongs to the NAD-dependent glycerol-3-phosphate dehydrogenase family.

It catalyses the reaction sn-glycerol 3-phosphate + NAD(+) = dihydroxyacetone phosphate + NADH + H(+). The protein is Glycerol-3-phosphate dehydrogenase [NAD(+)] (GPD) of Pichia angusta (Yeast).